We begin with the raw amino-acid sequence, 189 residues long: Interferon alpha-1 (189 aa).

Residues 1–23 form the signal peptide; sequence MAPAWSLLLALLLLSCNAICSLG. 2 disulfides stabilise this stretch: Cys24–Cys122 and Cys52–Cys162.

Belongs to the alpha/beta interferon family. As to quaternary structure, interacts with CR2.

It localises to the secreted. In terms of biological role, produced by macrophages, IFN-alpha have antiviral activities. Interferon stimulates the production of two enzymes: a protein kinase and an oligoadenylate synthetase. This is Interferon alpha-1 from Bos taurus (Bovine).